The chain runs to 579 residues: MLSCDICGETVSSEPDMKAHLLIVHMENEVICPFCKLSGVNYDEMCFHIETAHFEQNELERNFERINTVQYGISDNRKDSSLQCRADINSSVHSACASNQPKISAQSLPKDGTLKHKDFYSENLTESRKFLKSTEKQSDRTKIKESIYETMYSPPECPFCGKIEDNSQDMETHVKTKHADLLDTPLEDCNQLLYDCPMCGLVCTNYHILQEHVDLHLEESSFGQGVNRVQCSRDLELAQQLQQEEDRKRRSEESRQEMEEFQKLQRQYGLDNSGGYKQQQLRNMEIEVNRGRMHPSEFHRRKADMMESLAIGVDDGKTKTSGIMEALYRYYQNAATDVRRVWLSAGVDHFHSSFGDKGWGCGYRNFQMLLSSLLQNDAYDDSLKGMSVPCIPKIQSMIEDAWKEGFDPQGASQLNDKLQGTKAWIGACEIYTLLTSLRIKCRIVDFHKSTGPLGTHPRLFEWILSYYASEREGSPKVVCTSKPPIYLQHQGHSRTVVGIEEKKNRTLCLLVFDPGCPSREMQKLLKHDMEVSSLKQLRKFVGNLKHKQYQIVAVEGVLSSEEKIARRQASQVFTAEKIP.

The segment at 2–25 adopts a C2H2-type 1 zinc-finger fold; sequence LSCDICGETVSSEPDMKAHLLIVH. The segment at 30-53 adopts a C2H2-type 2; atypical zinc-finger fold; it reads VICPFCKLSGVNYDEMCFHIETAH. C2H2-type zinc fingers lie at residues 155-178 and 194-216; these read PECP…KTKH and YDCP…VDLH. The tract at residues 227–249 is MIU; the sequence is NRVQCSRDLELAQQLQQEEDRKR. The segment at 250–275 is zUBD/ZHA; the sequence is RSEESRQEMEEFQKLQRQYGLDNSGG. The residue at position 263 (Lys263) is an N6-acetyllysine. Cys361 serves as the catalytic Nucleophile. Residue His492 is the Proton acceptor of the active site. Residue Asp513 is part of the active site.

It belongs to the peptidase C78 family. ZUFSP subfamily. In terms of assembly, interacts with RPA1 and RPA2.

It localises to the cytoplasm. The protein localises to the nucleus. The catalysed reaction is Thiol-dependent hydrolysis of ester, thioester, amide, peptide and isopeptide bonds formed by the C-terminal Gly of ubiquitin (a 76-residue protein attached to proteins as an intracellular targeting signal).. Its function is as follows. Deubiquitinase with endodeubiquitinase activity that specifically interacts with and cleaves 'Lys-63'-linked long polyubiquitin chains. Shows only weak activity against 'Lys-11' and 'Lys-48'-linked chains. Plays an important role in genome stability pathways, functioning to prevent spontaneous DNA damage and also promote cellular survival in response to exogenous DNA damage. Modulates the ubiquitination status of replication protein A (RPA) complex proteins in response to replication stress. The chain is Zinc finger-containing ubiquitin peptidase 1 from Bos taurus (Bovine).